A 396-amino-acid polypeptide reads, in one-letter code: Acetylornithine aminotransferase 2 (396 aa).

Residues 102–103 (GA) and Phe134 contribute to the pyridoxal 5'-phosphate site. Position 137 (Arg137) interacts with N(2)-acetyl-L-ornithine. 219–222 (DEVQ) provides a ligand contact to pyridoxal 5'-phosphate. N6-(pyridoxal phosphate)lysine is present on Lys248. Residue Thr276 coordinates pyridoxal 5'-phosphate.

This sequence belongs to the class-III pyridoxal-phosphate-dependent aminotransferase family. ArgD subfamily. In terms of assembly, homodimer. The cofactor is pyridoxal 5'-phosphate.

It is found in the cytoplasm. The catalysed reaction is N(2)-acetyl-L-ornithine + 2-oxoglutarate = N-acetyl-L-glutamate 5-semialdehyde + L-glutamate. The protein operates within amino-acid biosynthesis; L-arginine biosynthesis; N(2)-acetyl-L-ornithine from L-glutamate: step 4/4. This is Acetylornithine aminotransferase 2 from Bordetella bronchiseptica (strain ATCC BAA-588 / NCTC 13252 / RB50) (Alcaligenes bronchisepticus).